Reading from the N-terminus, the 203-residue chain is Transcriptional regulator GfcR (203 aa).

The protein belongs to the purine/pyrimidine phosphoribosyltransferase family. GfcR subfamily.

This Methanococcoides burtonii (strain DSM 6242 / NBRC 107633 / OCM 468 / ACE-M) protein is Transcriptional regulator GfcR.